The following is a 466-amino-acid chain: MAIQVFNSLTRKKEPFVPLEEGKVKMYVCGPTVYNYIHIGNARPPIVYDMIRRYLKYRGYEVLFVSNFTDVDDKIIRVANELGEDVFAVANRFIEAYKQDTSALGVLEADHHPRVTETMSEIISFIRVLEEKGYAYEQGGDVYFRTRKFKEYGKLSAQSIDDLLSGARIEVDERKEDPLDFVLWKAAKEGEVSWDSPWGKGRPGWHIECSAMVKKYLGDTIDIHAGGQDLKFPHHENEIAQSECMTGKPMANYWLHNGFINLDNEKMSKSLGNVVLANEMIRQHSAEVLRFFMLSAHYRSPINFSDELLEGAKRGLERLQTAVSSLVHRLQESADFGGTEPWLERIDEFRGRFIEEMDDDFNSANGIAVLFDLAKEANRYLREEQTSKAVLQSFIDLFNELGGVLGVTLNRQEELLDEEIERLIEERNEARKAKNFQRADDIRDQLKAEGIILEDTPQGVRWKRGS.

A Zn(2+)-binding site is contributed by Cys29. The short motif at 31-41 (PTVYNYIHIGN) is the 'HIGH' region element. 3 residues coordinate Zn(2+): Cys209, His234, and Glu238. The 'KMSKS' region motif lies at 266–270 (KMSKS). Residue Lys269 coordinates ATP. Ser270 carries the phosphoserine modification.

The protein belongs to the class-I aminoacyl-tRNA synthetase family. In terms of assembly, monomer. Zn(2+) serves as cofactor.

The protein localises to the cytoplasm. It catalyses the reaction tRNA(Cys) + L-cysteine + ATP = L-cysteinyl-tRNA(Cys) + AMP + diphosphate. This chain is Cysteine--tRNA ligase (cysS), found in Halalkalibacterium halodurans (strain ATCC BAA-125 / DSM 18197 / FERM 7344 / JCM 9153 / C-125) (Bacillus halodurans).